Reading from the N-terminus, the 428-residue chain is Phosphomethylpyrimidine synthase 2 (428 aa).

Substrate contacts are provided by residues Met94, Tyr123, His162, 184-186, 225-228, and Glu264; these read SRG and NGMR. His268 is a binding site for Zn(2+). Substrate is bound at residue Tyr291. Residue His332 coordinates Zn(2+). [4Fe-4S] cluster is bound by residues Cys408, Cys411, and Cys415.

This sequence belongs to the ThiC family. Requires [4Fe-4S] cluster as cofactor.

The enzyme catalyses 5-amino-1-(5-phospho-beta-D-ribosyl)imidazole + S-adenosyl-L-methionine = 4-amino-2-methyl-5-(phosphooxymethyl)pyrimidine + CO + 5'-deoxyadenosine + formate + L-methionine + 3 H(+). The protein operates within cofactor biosynthesis; thiamine diphosphate biosynthesis. Catalyzes the synthesis of the hydroxymethylpyrimidine phosphate (HMP-P) moiety of thiamine from aminoimidazole ribotide (AIR) in a radical S-adenosyl-L-methionine (SAM)-dependent reaction. The protein is Phosphomethylpyrimidine synthase 2 of Methanosarcina mazei (strain ATCC BAA-159 / DSM 3647 / Goe1 / Go1 / JCM 11833 / OCM 88) (Methanosarcina frisia).